Consider the following 125-residue polypeptide: Protein ApaG (125 aa).

An ApaG domain is found at 1–125 (MNDTPRVCVQ…FRLAIATHIH (125 aa)).

This Erwinia tasmaniensis (strain DSM 17950 / CFBP 7177 / CIP 109463 / NCPPB 4357 / Et1/99) protein is Protein ApaG.